A 143-amino-acid chain; its full sequence is Large ribosomal subunit protein uL11 (143 aa).

This sequence belongs to the universal ribosomal protein uL11 family. Part of the ribosomal stalk of the 50S ribosomal subunit. Interacts with L10 and the large rRNA to form the base of the stalk. L10 forms an elongated spine to which L12 dimers bind in a sequential fashion forming a multimeric L10(L12)X complex. In terms of processing, one or more lysine residues are methylated.

Functionally, forms part of the ribosomal stalk which helps the ribosome interact with GTP-bound translation factors. The sequence is that of Large ribosomal subunit protein uL11 from Paenarthrobacter aurescens (strain TC1).